Here is a 151-residue protein sequence, read N- to C-terminus: Acidic phospholipase A2 2 (151 aa).

Positions Met-1–Leu-27 are cleaved as a signal peptide. 7 disulfide bridges follow: Cys-38-Cys-104, Cys-54-Cys-151, Cys-56-Cys-72, Cys-71-Cys-132, Cys-78-Cys-125, Cys-88-Cys-118, and Cys-111-Cys-123. Residues Tyr-55, Gly-57, and Gly-59 each coordinate Ca(2+). His-75 is an active-site residue. Asp-76 is a Ca(2+) binding site. Asp-126 is an active-site residue.

This sequence belongs to the phospholipase A2 family. Group I subfamily. D49 sub-subfamily. It depends on Ca(2+) as a cofactor. Expressed by the venom gland.

Its subcellular location is the secreted. The enzyme catalyses a 1,2-diacyl-sn-glycero-3-phosphocholine + H2O = a 1-acyl-sn-glycero-3-phosphocholine + a fatty acid + H(+). PLA2 catalyzes the calcium-dependent hydrolysis of the 2-acyl groups in 3-sn-phosphoglycerides. The polypeptide is Acidic phospholipase A2 2 (Tropidechis carinatus (Australian rough-scaled snake)).